The chain runs to 132 residues: uncharacterized protein (132 aa).

This is an uncharacterized protein from Gallus gallus (Chicken).